Reading from the N-terminus, the 64-residue chain is Large ribosomal subunit protein bL35 (64 aa).

This sequence belongs to the bacterial ribosomal protein bL35 family.

This Pseudomonas putida (strain W619) protein is Large ribosomal subunit protein bL35.